A 246-amino-acid chain; its full sequence is Probable transcriptional regulatory protein BVU_3469 (246 aa).

This sequence belongs to the TACO1 family.

The protein localises to the cytoplasm. This Phocaeicola vulgatus (strain ATCC 8482 / DSM 1447 / JCM 5826 / CCUG 4940 / NBRC 14291 / NCTC 11154) (Bacteroides vulgatus) protein is Probable transcriptional regulatory protein BVU_3469.